Here is a 287-residue protein sequence, read N- to C-terminus: uncharacterized protein (287 aa).

Residues 115–287 (PQNFDREWNP…NLAIELLKAI (173 aa)) enclose the ATP-grasp domain. Residues Lys145 and 178–188 (QKYITCSKGES) each bind ATP. 3 residues coordinate Mg(2+): Asp248, Glu261, and Asn263. Positions 248, 261, and 263 each coordinate Mn(2+).

The protein belongs to the RimK family.

This is an uncharacterized protein from Mycoplasma genitalium (strain ATCC 33530 / DSM 19775 / NCTC 10195 / G37) (Mycoplasmoides genitalium).